A 276-amino-acid chain; its full sequence is Bifunctional protein FolD (276 aa).

NADP(+) is bound by residues 158–160 (NRS), Ser-183, and Ile-224.

It belongs to the tetrahydrofolate dehydrogenase/cyclohydrolase family. As to quaternary structure, homodimer.

The catalysed reaction is (6R)-5,10-methylene-5,6,7,8-tetrahydrofolate + NADP(+) = (6R)-5,10-methenyltetrahydrofolate + NADPH. It carries out the reaction (6R)-5,10-methenyltetrahydrofolate + H2O = (6R)-10-formyltetrahydrofolate + H(+). It participates in one-carbon metabolism; tetrahydrofolate interconversion. Catalyzes the oxidation of 5,10-methylenetetrahydrofolate to 5,10-methenyltetrahydrofolate and then the hydrolysis of 5,10-methenyltetrahydrofolate to 10-formyltetrahydrofolate. In Picrophilus torridus (strain ATCC 700027 / DSM 9790 / JCM 10055 / NBRC 100828 / KAW 2/3), this protein is Bifunctional protein FolD.